Consider the following 259-residue polypeptide: Hydroxyacylglutathione hydrolase (259 aa).

Positions 56, 58, 60, 61, 112, 133, and 171 each coordinate Zn(2+).

Belongs to the metallo-beta-lactamase superfamily. Glyoxalase II family. As to quaternary structure, monomer. It depends on Zn(2+) as a cofactor.

The catalysed reaction is an S-(2-hydroxyacyl)glutathione + H2O = a 2-hydroxy carboxylate + glutathione + H(+). Its pathway is secondary metabolite metabolism; methylglyoxal degradation; (R)-lactate from methylglyoxal: step 2/2. Its function is as follows. Thiolesterase that catalyzes the hydrolysis of S-D-lactoyl-glutathione to form glutathione and D-lactic acid. The chain is Hydroxyacylglutathione hydrolase from Pseudomonas putida (strain W619).